The primary structure comprises 797 residues: Sodium/hydrogen exchanger 4 (797 aa).

Residues 1 to 13 are Cytoplasmic-facing; that stretch reads MGPAMFMAFRLWN. The name=A/M1 intramembrane region spans 14-28; that stretch reads WLLLLAVLTRSEATS. Topologically, residues 29–69 are cytoplasmic; the sequence is YVNESSNPTAQQAPDARFAASSSDPDEGISVFELDYDYVQI. The tract at residues 32–52 is disordered; sequence ESSNPTAQQAPDARFAASSSD. Residues 70–90 constitute an intramembrane region (name=B/M2); sequence PYEVTLWILLASLAKIGFHLY. The Cytoplasmic portion of the chain corresponds to 91–94; the sequence is HRLP. The chain crosses the membrane as a helical span at residues 95 to 114; sequence HLMPESCLLIIVGALVGGII. The Extracellular portion of the chain corresponds to 115–127; it reads FGTHHKSPPVMDS. The chain crosses the membrane as a helical span at residues 128 to 148; sequence SIYFLYLLPPIVLESGYFMPT. Residues 149-154 are Cytoplasmic-facing; the sequence is RPFFEN. A helical transmembrane segment spans residues 155–175; sequence IGSILWWAGLGALINAFGIGL. Over 176-194 the chain is Extracellular; it reads SLYFICQIKAFGLGDINLL. The helical transmembrane segment at 195 to 215 threads the bilayer; it reads HNLLFGSLISAVDPVAVLAVF. Residues 216–226 lie on the Cytoplasmic side of the membrane; sequence EEARVNEQLYM. Residues 227–247 form a helical membrane-spanning segment; that stretch reads MIFGEALLNDGISVVLYNILI. The Extracellular portion of the chain corresponds to 248-270; the sequence is AFTKMHKFEDIEAVDILAGCARF. A helical membrane pass occupies residues 271 to 291; it reads VIVGCGGVFFGIIFGFISAFI. Residues 292–304 are Cytoplasmic-facing; that stretch reads TRFTQNISAIEPL. A helical membrane pass occupies residues 305–325; the sequence is IVFMFSYLSYLAAETLYLSGI. At 326-352 the chain is on the extracellular side; the sequence is LAITACAVTMKKYVEENVSQTSYTTIK. Residue Asn342 is glycosylated (N-linked (GlcNAc...) asparagine). Residues 353 to 373 traverse the membrane as a helical segment; the sequence is YFMKMLSSVSETLIFIFMGVS. The Cytoplasmic segment spans residues 374–384; it reads TIGKNHEWNWA. Residues 385–405 traverse the membrane as a helical segment; that stretch reads FICFTLLFCQIWRAISVFTLF. Over 406 to 420 the chain is Extracellular; sequence YVSNQFRTFPFSIKD. Residues 421–441 constitute an intramembrane region (name=L); it reads QFIIFYSGVRGAGSFSLAFLL. Residues 442-450 are Extracellular-facing; the sequence is PLSLFPRKK. Residues 451–471 traverse the membrane as a helical segment; the sequence is LFVTATLVVTYFTVFFQGITI. The Cytoplasmic segment spans residues 472-797; sequence GPLVRYLDVR…KSHSPLLHRK (326 aa). Over residues 759–769 the composition is skewed to acidic residues; sequence YDSGEQTEEET. The disordered stretch occupies residues 759–797; it reads YDSGEQTEEETSAILSRWTAEHRHSTEHHKSHSPLLHRK. A compositionally biased stretch (basic residues) spans 783–797; it reads STEHHKSHSPLLHRK.

It belongs to the monovalent cation:proton antiporter 1 (CPA1) transporter (TC 2.A.36) family. Homodimer; each protomer has one site for sodium and one site for proton binding. Interacts with CHP1 and CHP2. Post-translationally, may be phosphorylated. Expressed in kidney. Expressed in uterus and endometrial epithelial cells. Expressed in the inner segments of inner medullary collecting ducts (IMCD) in kidney. Expressed in AGTR1-positive neurons in organum vasculosum of the lamina terminalis (at protein level).

Its subcellular location is the basolateral cell membrane. It localises to the apical cell membrane. The protein resides in the zymogen granule membrane. The catalysed reaction is Na(+)(in) + H(+)(out) = Na(+)(out) + H(+)(in). It catalyses the reaction Na(+)(out) + NH4(+)(in) = Na(+)(in) + NH4(+)(out). With respect to regulation, up-regulated in response to high extracellular sodium concentration. Electroneutral antiporter that exchanges sodium for protons or ammonium ions at the basolateral membrane of epithelia to regulate cell volume and intracellular pH upon hypertonic conditions. As part of transcellular ammonia transport in renal tubules, mediates basolateral ammonium extrusion in the medullary thick ascending limb, regulating the corticopapillary ammonium gradient and overall renal acid excretion. Mediates sodium:proton exchange in gastric parietal cells secondary to cAMP-dependent acid secretion and hyperosmolarity. Possibly coupled to chloride:bicarbonate antiporter, enables loading of parietal cells with sodium and chloride ions to maintain cell volume and normal gastric acid secretion. Functions as a sodium sensor in neurons of organum vasculosum of the lamina terminalis where it regulates water intake in response to increased sodium concentration in body fluids. This is Sodium/hydrogen exchanger 4 (Slc9a4) from Mus musculus (Mouse).